A 359-amino-acid chain; its full sequence is MPRPLIATIDIAALRSNLALAKARAPHSKAWAVVKANAYGHGLERGMRGFAAADGLGLIELDAAARLRELGWNKRILLLEGFFDASDTKLLAEHRLDTVIHCEEQLLMLEQAKLRTQIDVHLKLNSGMNRLGFTPARYRAAYERLRAIPAVRHISFVTHFANAEDPDNPVLPVQEQVRRFKEATRDLPGEKSLANSATDLLHPAAAADWIRPGIMLYGATPGAQSAEQFGLRAAMSLHSEIIGVQHIVAGDAVGYGSAFVATAPMTIGVVACGYADGYPRHAPSGTPVIVDGVKTRMVGRVSMDMITVDLTPVAKPRIGSKVTLWGASLPIDEVANAAGTVGYELMCGLAPRVQIVEVN.

K35 serves as the catalytic Proton acceptor; specific for D-alanine. K35 is subject to N6-(pyridoxal phosphate)lysine. R130 is a substrate binding site. The active-site Proton acceptor; specific for L-alanine is Y255. M303 serves as a coordination point for substrate.

It belongs to the alanine racemase family. Pyridoxal 5'-phosphate is required as a cofactor.

The enzyme catalyses L-alanine = D-alanine. The protein operates within amino-acid biosynthesis; D-alanine biosynthesis; D-alanine from L-alanine: step 1/1. In terms of biological role, catalyzes the interconversion of L-alanine and D-alanine. May also act on other amino acids. The sequence is that of Alanine racemase (alr) from Janthinobacterium sp. (strain Marseille) (Minibacterium massiliensis).